The primary structure comprises 274 residues: Orotidine 5'-phosphate decarboxylase (274 aa).

Substrate is bound by residues Asp-40, Lys-62–His-64, Asp-93–Thr-102, Tyr-227, and Arg-245. The active-site Proton donor is the Lys-95.

The protein belongs to the OMP decarboxylase family.

It carries out the reaction orotidine 5'-phosphate + H(+) = UMP + CO2. The protein operates within pyrimidine metabolism; UMP biosynthesis via de novo pathway; UMP from orotate: step 2/2. This chain is Orotidine 5'-phosphate decarboxylase (URA3), found in Coccidioides immitis (strain RS) (Valley fever fungus).